A 96-amino-acid polypeptide reads, in one-letter code: Aspartyl/glutamyl-tRNA(Asn/Gln) amidotransferase subunit C (96 aa).

The interval 64–96 (REDEPEPGLPREEVLKNAPDQQDGQFRVPAILE) is disordered.

It belongs to the GatC family. As to quaternary structure, heterotrimer of A, B and C subunits.

It catalyses the reaction L-glutamyl-tRNA(Gln) + L-glutamine + ATP + H2O = L-glutaminyl-tRNA(Gln) + L-glutamate + ADP + phosphate + H(+). The enzyme catalyses L-aspartyl-tRNA(Asn) + L-glutamine + ATP + H2O = L-asparaginyl-tRNA(Asn) + L-glutamate + ADP + phosphate + 2 H(+). Allows the formation of correctly charged Asn-tRNA(Asn) or Gln-tRNA(Gln) through the transamidation of misacylated Asp-tRNA(Asn) or Glu-tRNA(Gln) in organisms which lack either or both of asparaginyl-tRNA or glutaminyl-tRNA synthetases. The reaction takes place in the presence of glutamine and ATP through an activated phospho-Asp-tRNA(Asn) or phospho-Glu-tRNA(Gln). The protein is Aspartyl/glutamyl-tRNA(Asn/Gln) amidotransferase subunit C of Geobacillus thermodenitrificans (strain NG80-2).